We begin with the raw amino-acid sequence, 423 residues long: Imidazolonepropionase (423 aa).

Positions 78 and 80 each coordinate Fe(3+). Zn(2+) contacts are provided by H78 and H80. The 4-imidazolone-5-propanoate site is built by R87, Y150, and H183. Y150 lines the N-formimidoyl-L-glutamate pocket. H247 is a binding site for Fe(3+). H247 contacts Zn(2+). E250 contributes to the 4-imidazolone-5-propanoate binding site. D322 provides a ligand contact to Fe(3+). D322 contributes to the Zn(2+) binding site. Residues N324 and G326 each coordinate N-formimidoyl-L-glutamate. A 4-imidazolone-5-propanoate-binding site is contributed by S327.

Belongs to the metallo-dependent hydrolases superfamily. HutI family. The cofactor is Zn(2+). It depends on Fe(3+) as a cofactor.

It localises to the cytoplasm. It carries out the reaction 4-imidazolone-5-propanoate + H2O = N-formimidoyl-L-glutamate. It participates in amino-acid degradation; L-histidine degradation into L-glutamate; N-formimidoyl-L-glutamate from L-histidine: step 3/3. Catalyzes the hydrolytic cleavage of the carbon-nitrogen bond in imidazolone-5-propanoate to yield N-formimidoyl-L-glutamate. It is the third step in the universal histidine degradation pathway. In Bacillus cereus (strain ATCC 14579 / DSM 31 / CCUG 7414 / JCM 2152 / NBRC 15305 / NCIMB 9373 / NCTC 2599 / NRRL B-3711), this protein is Imidazolonepropionase.